A 358-amino-acid polypeptide reads, in one-letter code: NADH-quinone oxidoreductase subunit H (358 aa).

A run of 8 helical transmembrane segments spans residues 20–40 (ITVG…IPLI), 95–115 (ALFY…WAVI), 128–148 (IGLL…IIAG), 168–188 (ISYE…SGSM), 206–226 (VFSW…ISAV), 253–273 (GFAF…ISAL), 290–310 (WGFI…AVLY), and 334–354 (VLIP…ISPL).

Belongs to the complex I subunit 1 family. NDH-1 is composed of 14 different subunits. Subunits NuoA, H, J, K, L, M, N constitute the membrane sector of the complex.

Its subcellular location is the cell inner membrane. It catalyses the reaction a quinone + NADH + 5 H(+)(in) = a quinol + NAD(+) + 4 H(+)(out). Its function is as follows. NDH-1 shuttles electrons from NADH, via FMN and iron-sulfur (Fe-S) centers, to quinones in the respiratory chain. The immediate electron acceptor for the enzyme in this species is believed to be ubiquinone. Couples the redox reaction to proton translocation (for every two electrons transferred, four hydrogen ions are translocated across the cytoplasmic membrane), and thus conserves the redox energy in a proton gradient. This subunit may bind ubiquinone. This chain is NADH-quinone oxidoreductase subunit H, found in Neisseria meningitidis serogroup A / serotype 4A (strain DSM 15465 / Z2491).